The following is a 654-amino-acid chain: Potassium voltage-gated channel subfamily A member 4 (654 aa).

At 1-305 the chain is on the cytoplasmic side; sequence MEVAMVSAES…LLFEYPESSS (305 aa). The tract at residues 24-145 is disordered; sequence QARARERERL…EEGRFYYSEE (122 aa). Residues 36–50 show a composition bias toward low complexity; the sequence is SRAAAAAAVAAATAA. Residues 81–99 show a composition bias toward basic residues; that stretch reads GSRRRRRQRTEKKKLHHRQ. S122 is modified (phosphoserine). A compositionally biased stretch (acidic residues) spans 122-137; sequence SEEEEDEEEEEEEEEE. The helical transmembrane segment at 306–327 threads the bilayer; that stretch reads PARGIAIVSVLVILISIVIFCL. The Extracellular portion of the chain corresponds to 328–371; sequence ETLPEFRDDRDLIMALSAGGHSRLLNDTSAPHLENSGHTIFNDP. A glycan (N-linked (GlcNAc...) asparagine) is linked at N353. Residues 372–393 traverse the membrane as a helical segment; that stretch reads FFIVETVCIVWFSFEFVVRCFA. The Cytoplasmic portion of the chain corresponds to 394 to 404; the sequence is CPSQALFFKNI. A helical transmembrane segment spans residues 405–425; it reads MNIIDIVSILPYFITLGTDLA. Residues 426 to 440 lie on the Extracellular side of the membrane; it reads QQQGGGNGQQQQAMS. The helical; Voltage-sensor transmembrane segment at 441–461 threads the bilayer; it reads FAILRIIRLVRVFRIFKLSRH. The Cytoplasmic portion of the chain corresponds to 462-476; sequence SKGLQILGHTLRASM. Residues 463–476 are S4-S5 linker; sequence KGLQILGHTLRASM. The chain crosses the membrane as a helical span at residues 477–498; that stretch reads RELGLLIFFLFIGVILFSSAVY. The Extracellular portion of the chain corresponds to 499 to 512; sequence FAEADEPTTHFQSI. Residues 513–524 constitute an intramembrane region (helical); the sequence is PDAFWWAVVTMT. The Selectivity filter motif lies at 525–530; that stretch reads TVGYGD. The stretch at 525–532 is an intramembrane region; sequence TVGYGDMK. Residues 533-539 lie on the Extracellular side of the membrane; sequence PITVGGK. Residues 540 to 568 traverse the membrane as a helical segment; it reads IVGSLCAIAGVLTIALPVPVIVSNFNYFY. At 569–654 the chain is on the cytoplasmic side; the sequence is HRETENEEQT…SNAKAVETDV (86 aa). A Phosphoserine; by PKA modification is found at S600. Over residues 630-641 the composition is skewed to basic and acidic residues; the sequence is CQGKGDESETDK. Residues 630-654 are disordered; it reads CQGKGDESETDKNNCSNAKAVETDV. The PDZ-binding signature appears at 652–654; that stretch reads TDV.

It belongs to the potassium channel family. A (Shaker) (TC 1.A.1.2) subfamily. Kv1.4/KCNA4 sub-subfamily. In terms of assembly, homotetramer and heterotetramer of potassium channel proteins. Interacts with KCNAB1 and KCNAB2. Interacts with DLG1, DLG2 and DLG4 via their PDZ domains. Interacts with SIGMAR1. Detected in a complex with KCNA1. Interacts with KCNA2. Part of a complex containing KCNA1, KCNAB1 and LGI1. Interacts (via cytoplasmic N-terminal domain) with KCNRG. Expressed in the brain, lens and retina.

The protein resides in the cell membrane. The protein localises to the cell projection. It is found in the axon. The catalysed reaction is K(+)(in) = K(+)(out). Its function is as follows. Voltage-gated potassium channel that mediates transmembrane potassium transport in excitable membranes. Forms tetrameric potassium-selective channels through which potassium ions pass in accordance with their electrochemical gradient. The channel alternates between opened and closed conformations in response to the voltage difference across the membrane. Can form functional homotetrameric channels and heterotetrameric channels that contain variable proportions of KCNA1, KCNA2, KCNA4, KCNA5, and possibly other family members as well; channel properties depend on the type of alpha subunits that are part of the channel. Channel properties are modulated by cytoplasmic beta subunits that regulate the subcellular location of the alpha subunits and promote rapid inactivation. In vivo, membranes probably contain a mixture of heteromeric potassium channel complexes, making it difficult to assign currents observed in intact tissues to any particular potassium channel family member. Homotetrameric KCNA4 forms a potassium channel that opens in response to membrane depolarization, followed by rapid spontaneous channel closure. Likewise, a heterotetrameric channel formed by KCNA1 and KCNA4 shows rapid inactivation. This is Potassium voltage-gated channel subfamily A member 4 (Kcna4) from Mus musculus (Mouse).